The chain runs to 420 residues: G2/mitotic-specific cyclin-A (420 aa).

The tract at residues Val64–Asp93 is disordered. A compositionally biased stretch (polar residues) spans Gln83–Asp93.

The protein belongs to the cyclin family. Cyclin AB subfamily.

Functionally, essential for the control of the cell cycle at the G2/M (mitosis) transition. Interacts with the CDC2 and CDK2 protein kinases to form MPF. G2/M cyclins accumulate steadily during G2 and are abruptly destroyed at mitosis. The protein is G2/mitotic-specific cyclin-A of Hydra viridissima (Green hydra).